A 1587-amino-acid polypeptide reads, in one-letter code: MKKDGSSGSFGIKASPGSLSRAVSWINFSSLSRQTKRLFRSDGELSVCGHQVEADDENWIYRTQPRKAVSNLDEESRWTVHYTAPWHQQENVFLPATRPPCVEDLHRQAKLNLKSVLRECDKLRQDGCRSSQYYSQGPTFAAGSSPCDDYQDEDTEADRKCSLSSSEEERFIGIRRPKTPTSGDFSDLHTQTNWTKSLPLPTPEEKTRQQAQTVQADVVPINITASATGQDDDGSAHSLYVPDHYSTLGRLDSYRSTGQCLETRDTSCQTEDVKVIPPSMRRIRAHKGVGVAAQMSHLSGSSGNMSVLSDSAGVVFPSRLSNDTGFHSLPRTGPRASTYSLEGRMGALGSTEDTDDTSPYQGGSLQGHENFAHLGGASSTGMLSRPKSQQLRFLESPACVVSPHAAYSTSVIPNATLLSSSEVIVIHTAQSAGQLDSRTPGSSSYSKIKPRDRPTPRCSVKDDHQSPRHHWNEGHLIHSRALASSVPGATTLLSLHDSEVSLNAPANRENGSQAILYHCRNNPSFPDHPSDVDGKSECSYSGDRGCGSSEPWEYKTSSNGRASPLKPHLATPGCSTPTSNVSSCSLDQTSLKGDTRSLCSEDHDGYYTTTHEAGNLYTLSDGLGNPRHSMVNVFDGRAQRSQGDQAAHQDKILSRNISLKKAKKPPLPPSRTDSLRRIPKKNNQTNGQVLNESLIASLQHSLQLSLPGKGGSSPSQSPCSDFEEPWLPRSRSQSIVSEGSSLTSTTTPNVYSLCGVTPSQSDTSSVKSEYTDPWGYYIDYTSLQEDPGNPTGGCSANTEAATGNGPVRHIQEGSRVPVPQVPGCSVRPKIASPEKSQRVTSPSSGYSSQSNTPTALTPVPVFLKSMSPANGKGKAKPKVPERKSSLISSMSISSSSTSLSSNTSTEGSGTMKKLDTTLASALAPPPPPLPPLPSPCLADKSPFLPPPPPLADCSEGSPLPPSPMFPPPPPEALVPFCSPTDGCLSPSPTAVSPSLPRSLPPVPAPPPFLPSSEPPPAPPLDPKLMKENRPFFKNSSQSESSREALRRPANKEEGCRPPMPLITTEALQMVQLRPVRKNSGAGAVLFSEPSAQEQRTPTAPQYHLKPSAFLKSRNSINEMESESQAASVTSSLPMPAKSQSQGDHDSAVERGGLPSCSDGAPGPGPSLRTTLLPDSSPSRKPPPISKKPKLFLVVPPPQRDFTAEPTENGSEAFPGVPSPTRAEGEAVRSQEEKSSPASRAGSHATAPTPGSPALEPGTAGSLSSSIVEANVPMVQPNTSPGPTQEESGENSVDGERNAKSCLSQQGREAGLLEPNTAASSSDPVDVSKEEGSDEVLTPTKPRTTEDLFAAIHRSKRKVLGRKDSEDDHTRNHSPSPPVTPTSAAPNLASPKQVGSIQRSIKKSTTSSDNFKALLLKKGSRSDTSARMSAAEMLKSTDPRFQRSRSEPSADSPDSPSSCSPNKNRRAQEEWAKNEGLMPRSLSFSGPRYSRSRTPPSAASSRYSMRNRIQSSPMTVISEGEGEPAEPADNKARRALDATRVCSLDRLTGQEMDQASLLCSEEPASVDGIGRAEGNGPSEQCGGTEQKS.

S24 bears the Phosphoserine mark. Disordered regions lie at residues F140–L163 and R176–T202. Residues T179–K196 are compositionally biased toward polar residues. 2 positions are modified to phosphoserine: S197 and S328. Over residues S431–S446 the composition is skewed to polar residues. 2 disordered regions span residues S431–H470 and S549–C584. Residues K449–H470 show a composition bias toward basic and acidic residues. Position 563 is a phosphoserine (S563). A compositionally biased stretch (polar residues) spans G573 to C584. Position 629 is a phosphoserine (S629). 3 disordered regions span residues K661–G687, S705–K767, and N789–M1059. Low complexity predominate over residues S705–S720. Composition is skewed to polar residues over residues S730 to V750, T757 to K767, G792 to A801, and R838 to A855. Residues S885 to M911 are compositionally biased toward low complexity. Composition is skewed to pro residues over residues A923 to S934, P958 to A972, and S998 to D1021. The span at S1040–C1055 shows a compositional bias: basic and acidic residues. A Phosphoserine modification is found at S1079. Disordered stretches follow at residues A1083–A1534 and V1565–S1587. Composition is skewed to polar residues over residues P1089–A1099 and S1112–Q1141. 2 positions are modified to phosphoserine: S1157 and S1218. Over residues A1222 to S1234 the composition is skewed to basic and acidic residues. Positions Q1275–E1285 are enriched in polar residues. The span at G1360–R1370 shows a compositional bias: basic and acidic residues. 2 positions are modified to phosphoserine: S1373 and S1375. T1379 bears the Phosphothreonine mark. Residues Q1392–N1409 are compositionally biased toward polar residues. The span at K1434–P1447 shows a compositional bias: basic and acidic residues. Low complexity-rich tracts occupy residues S1448 to P1460 and S1484 to S1503. A compositionally biased stretch (polar residues) spans P1576–S1587.

Belongs to the NHS family.

This chain is NHS-like protein 1 (Nhsl1), found in Mus musculus (Mouse).